We begin with the raw amino-acid sequence, 442 residues long: Proline--tRNA ligase (442 aa).

Belongs to the class-II aminoacyl-tRNA synthetase family. ProS type 2 subfamily. As to quaternary structure, homodimer.

The protein localises to the cytoplasm. It carries out the reaction tRNA(Pro) + L-proline + ATP = L-prolyl-tRNA(Pro) + AMP + diphosphate. Functionally, catalyzes the attachment of proline to tRNA(Pro) in a two-step reaction: proline is first activated by ATP to form Pro-AMP and then transferred to the acceptor end of tRNA(Pro). The polypeptide is Proline--tRNA ligase (Sinorhizobium medicae (strain WSM419) (Ensifer medicae)).